We begin with the raw amino-acid sequence, 91 residues long: Small ribosomal subunit protein bS20 (91 aa).

Disordered regions lie at residues 1-26 (MALR…RSRK) and 67-91 (HKNA…AQQS).

It belongs to the bacterial ribosomal protein bS20 family.

In terms of biological role, binds directly to 16S ribosomal RNA. This Deinococcus deserti (strain DSM 17065 / CIP 109153 / LMG 22923 / VCD115) protein is Small ribosomal subunit protein bS20.